The primary structure comprises 269 residues: Eukaryotic translation initiation factor 3 subunit G-1 (269 aa).

The RRM domain occupies 188–266 (AAIRISNLSE…LILSVEWSKP (79 aa)).

This sequence belongs to the eIF-3 subunit G family. Component of the eukaryotic translation initiation factor 3 (eIF-3) complex. The eIF-3 complex interacts with pix.

It is found in the cytoplasm. RNA-binding component of the eukaryotic translation initiation factor 3 (eIF-3) complex, which is involved in protein synthesis of a specialized repertoire of mRNAs and, together with other initiation factors, stimulates binding of mRNA and methionyl-tRNAi to the 40S ribosome. The eIF-3 complex specifically targets and initiates translation of a subset of mRNAs involved in cell proliferation. This subunit can bind 18S rRNA. This is Eukaryotic translation initiation factor 3 subunit G-1 from Drosophila willistoni (Fruit fly).